A 91-amino-acid chain; its full sequence is Small membrane A-kinase anchor protein (91 aa).

Gly-2 carries the N-myristoyl glycine lipid modification.

The protein belongs to the small membrane AKAP family. In terms of processing, may be palmitoylated at Cys-3.

The protein resides in the cell membrane. Its function is as follows. Binds to type I regulatory subunits of protein kinase A and may anchor/target them to the plasma membrane. In Xenopus tropicalis (Western clawed frog), this protein is Small membrane A-kinase anchor protein.